The sequence spans 180 residues: GTP cyclohydrolase 1 (180 aa).

Zn(2+) is bound by residues Cys71, His74, and Cys142.

The protein belongs to the GTP cyclohydrolase I family. As to quaternary structure, homomer.

The enzyme catalyses GTP + H2O = 7,8-dihydroneopterin 3'-triphosphate + formate + H(+). It functions in the pathway cofactor biosynthesis; 7,8-dihydroneopterin triphosphate biosynthesis; 7,8-dihydroneopterin triphosphate from GTP: step 1/1. This chain is GTP cyclohydrolase 1, found in Helicobacter pylori (strain Shi470).